A 103-amino-acid polypeptide reads, in one-letter code: uncharacterized protein (103 aa).

Low complexity predominate over residues 38-51; sequence TTTTSSTTSASTTS. The tract at residues 38-70 is disordered; it reads TTTTSSTTSASTTSQPSFSLPTSCNSNSPQSNL. A compositionally biased stretch (polar residues) spans 52-70; it reads QPSFSLPTSCNSNSPQSNL.

This is an uncharacterized protein from Dictyostelium discoideum (Social amoeba).